Here is a 383-residue protein sequence, read N- to C-terminus: Succinyl-diaminopimelate desuccinylase (383 aa).

His-72 is a binding site for Zn(2+). The active site involves Asp-74. Asp-105 is a Zn(2+) binding site. The active-site Proton acceptor is Glu-139. Residues Glu-140, Glu-168, and His-356 each contribute to the Zn(2+) site.

Belongs to the peptidase M20A family. DapE subfamily. In terms of assembly, homodimer. Zn(2+) is required as a cofactor. Requires Co(2+) as cofactor.

It catalyses the reaction N-succinyl-(2S,6S)-2,6-diaminopimelate + H2O = (2S,6S)-2,6-diaminopimelate + succinate. It participates in amino-acid biosynthesis; L-lysine biosynthesis via DAP pathway; LL-2,6-diaminopimelate from (S)-tetrahydrodipicolinate (succinylase route): step 3/3. Its function is as follows. Catalyzes the hydrolysis of N-succinyl-L,L-diaminopimelic acid (SDAP), forming succinate and LL-2,6-diaminopimelate (DAP), an intermediate involved in the bacterial biosynthesis of lysine and meso-diaminopimelic acid, an essential component of bacterial cell walls. The chain is Succinyl-diaminopimelate desuccinylase from Beijerinckia indica subsp. indica (strain ATCC 9039 / DSM 1715 / NCIMB 8712).